A 131-amino-acid polypeptide reads, in one-letter code: Transcription antitermination protein NusB (131 aa).

It belongs to the NusB family.

In terms of biological role, involved in transcription antitermination. Required for transcription of ribosomal RNA (rRNA) genes. Binds specifically to the boxA antiterminator sequence of the ribosomal RNA (rrn) operons. The protein is Transcription antitermination protein NusB of Campylobacter fetus subsp. fetus (strain 82-40).